The chain runs to 143 residues: Large ribosomal subunit protein uL15 (143 aa).

Positions 1–45 (MLLNTVQPGVGAKHAKRRVGRGIGSGLGKTCGRGHKGQKSRAGGF) are disordered. Residues 21 to 31 (RGIGSGLGKTC) show a composition bias toward gly residues.

It belongs to the universal ribosomal protein uL15 family. In terms of assembly, part of the 50S ribosomal subunit.

Functionally, binds to the 23S rRNA. The chain is Large ribosomal subunit protein uL15 from Chromobacterium violaceum (strain ATCC 12472 / DSM 30191 / JCM 1249 / CCUG 213 / NBRC 12614 / NCIMB 9131 / NCTC 9757 / MK).